We begin with the raw amino-acid sequence, 187 residues long: dTTP/UTP pyrophosphatase (187 aa).

Asp72 serves as the catalytic Proton acceptor.

Belongs to the Maf family. YhdE subfamily. A divalent metal cation serves as cofactor.

It localises to the cytoplasm. The catalysed reaction is dTTP + H2O = dTMP + diphosphate + H(+). It catalyses the reaction UTP + H2O = UMP + diphosphate + H(+). In terms of biological role, nucleoside triphosphate pyrophosphatase that hydrolyzes dTTP and UTP. May have a dual role in cell division arrest and in preventing the incorporation of modified nucleotides into cellular nucleic acids. The chain is dTTP/UTP pyrophosphatase from Vibrio cholerae serotype O1 (strain ATCC 39315 / El Tor Inaba N16961).